Here is a 436-residue protein sequence, read N- to C-terminus: VGFKAGVKDYKLTYYTPDYETKDTDILAAFRVTPQPGVPPEEAGAAVAAESSTGTWTTVWTDGLTSLDRYKGRCYHIEPVAGEDNQYICYVAYPLDLFEEGSVTNMFTSIVGNVFGFKALRALRLEDLRIPPAYVKTFQGPPHGIQVERDKLNKYGRPLLGCTIKPKLGLSAKNYGRAVYECLRGGLDFTKDDENVNSQPFMRWRDRFLFCAEAIYKAQAETGEIKGHYLNATAGTCEEMIKRAVFARELGVPIVMHDYLTGGFTANTSLAHYCRDNGLLLHIHRAMHAVIDRQKNHGMHFRVLAKALRMSGGDHIHAGTVVGKLEGEREITLGFVDLLRDDFVEKDRSRGIYFTQDWVSLPGVLPVASGGIHVWHMPALTEIFGDDSVLQFGGGTLGHPWGNAPGAVANRVALEACVQARNEGRDLAREGNEIIR.

N6,N6,N6-trimethyllysine is present on lysine 4. Asparagine 113 and threonine 163 together coordinate substrate. The active-site Proton acceptor is lysine 165. Lysine 167 serves as a coordination point for substrate. Lysine 191, aspartate 193, and glutamate 194 together coordinate Mg(2+). An N6-carboxylysine modification is found at lysine 191. The Proton acceptor role is filled by histidine 284. Substrate is bound by residues arginine 285, histidine 317, and serine 369.

Belongs to the RuBisCO large chain family. Type I subfamily. As to quaternary structure, heterohexadecamer of 8 large chains and 8 small chains; disulfide-linked. The disulfide link is formed within the large subunit homodimers. Requires Mg(2+) as cofactor. Post-translationally, the disulfide bond which can form in the large chain dimeric partners within the hexadecamer appears to be associated with oxidative stress and protein turnover.

Its subcellular location is the plastid. The protein resides in the chloroplast. The enzyme catalyses 2 (2R)-3-phosphoglycerate + 2 H(+) = D-ribulose 1,5-bisphosphate + CO2 + H2O. It carries out the reaction D-ribulose 1,5-bisphosphate + O2 = 2-phosphoglycolate + (2R)-3-phosphoglycerate + 2 H(+). Its function is as follows. RuBisCO catalyzes two reactions: the carboxylation of D-ribulose 1,5-bisphosphate, the primary event in carbon dioxide fixation, as well as the oxidative fragmentation of the pentose substrate in the photorespiration process. Both reactions occur simultaneously and in competition at the same active site. This chain is Ribulose bisphosphate carboxylase large chain, found in Sanguinaria canadensis (Bloodroot).